A 138-amino-acid chain; its full sequence is Large ribosomal subunit protein bL17 (138 aa).

Belongs to the bacterial ribosomal protein bL17 family. In terms of assembly, part of the 50S ribosomal subunit. Contacts protein L32.

This chain is Large ribosomal subunit protein bL17, found in Dinoroseobacter shibae (strain DSM 16493 / NCIMB 14021 / DFL 12).